A 484-amino-acid polypeptide reads, in one-letter code: Xylulose kinase (484 aa).

77-78 serves as a coordination point for substrate; the sequence is MH. D233 acts as the Proton acceptor in catalysis.

This sequence belongs to the FGGY kinase family. As to quaternary structure, homodimer.

The catalysed reaction is D-xylulose + ATP = D-xylulose 5-phosphate + ADP + H(+). It catalyses the reaction 1-deoxy-D-xylulose + ATP = 1-deoxy-D-xylulose 5-phosphate + ADP + H(+). Sugar binding is accompanied by a dramatic hinge-bending movement that enhances interactions with Mg-ATP. Functionally, catalyzes the phosphorylation of D-xylulose to D-xylulose 5-phosphate. Also catalyzes the phosphorylation of 1-deoxy-D-xylulose to 1-deoxy-D-xylulose 5-phosphate, with lower efficiency. Can also use D-ribulose, xylitol and D-arabitol, but D-xylulose is preferred over the other substrates. Has a weak substrate-independent Mg-ATP-hydrolyzing activity. In Escherichia coli (strain K12), this protein is Xylulose kinase.